Here is a 372-residue protein sequence, read N- to C-terminus: MRSIIADSKRLVVKVGSSLVTNDGKGLDHAAIGRWAAQIAALRAQGKEVVLVSSGAIAEGMQRLGWSKRPREIDELQAAAAVGQMGLAQVYESRFTEHGIRTAQILLTHADLADRERYLNARSTLLTLLRLGVVPIINENDTVVTDEIKFGDNDTLGALVANLIEGDALIILTDQSGLFTADPRKDPNATLVGEANAGAPELEAMAGGAGSSLGRGGMLTKILAAKRAAHSGANTVIASGREADVLVRLAAGEAIGTQLIARTARMAARKQWMADHLQVRGHVVIDAGAVEKLTAGGKSLLPIGVIDVQGAFARGEVIACVGPDGREVARGLTNYSSAETKLIHRKPSGEIEIVLGYMLEPELIHRDNLVLV.

ATP is bound at residue lysine 14. Residues serine 54, aspartate 141, and asparagine 153 each coordinate substrate. ATP is bound at residue 173–174; that stretch reads TD. Residues 280 to 358 form the PUA domain; sequence RGHVVIDAGA…GEIEIVLGYM (79 aa).

The protein belongs to the glutamate 5-kinase family.

Its subcellular location is the cytoplasm. The enzyme catalyses L-glutamate + ATP = L-glutamyl 5-phosphate + ADP. The protein operates within amino-acid biosynthesis; L-proline biosynthesis; L-glutamate 5-semialdehyde from L-glutamate: step 1/2. Catalyzes the transfer of a phosphate group to glutamate to form L-glutamate 5-phosphate. The chain is Glutamate 5-kinase from Burkholderia orbicola (strain MC0-3).